The sequence spans 512 residues: GMP synthase [glutamine-hydrolyzing] (512 aa).

A Glutamine amidotransferase type-1 domain is found at 7–197 (TIIVLDFGSQ…VFGVCGCSEG (191 aa)). Cysteine 84 acts as the Nucleophile in catalysis. Catalysis depends on residues histidine 171 and glutamate 173. The GMPS ATP-PPase domain maps to 198–387 (WNMENFIEVE…LGIPDEIVWR (190 aa)). 225-231 (SGGVDSS) contributes to the ATP binding site.

In terms of assembly, homodimer.

It catalyses the reaction XMP + L-glutamine + ATP + H2O = GMP + L-glutamate + AMP + diphosphate + 2 H(+). Its pathway is purine metabolism; GMP biosynthesis; GMP from XMP (L-Gln route): step 1/1. In terms of biological role, catalyzes the synthesis of GMP from XMP. The sequence is that of GMP synthase [glutamine-hydrolyzing] from Bacillus cereus (strain ATCC 10987 / NRS 248).